Here is a 230-residue protein sequence, read N- to C-terminus: Large ribosomal subunit protein uL1 (230 aa).

Belongs to the universal ribosomal protein uL1 family. Part of the 50S ribosomal subunit.

Binds directly to 23S rRNA. The L1 stalk is quite mobile in the ribosome, and is involved in E site tRNA release. In terms of biological role, protein L1 is also a translational repressor protein, it controls the translation of the L11 operon by binding to its mRNA. This chain is Large ribosomal subunit protein uL1, found in Nitrobacter winogradskyi (strain ATCC 25391 / DSM 10237 / CIP 104748 / NCIMB 11846 / Nb-255).